Reading from the N-terminus, the 276-residue chain is MDWILICKALALGIVEGLTEFLPVSSTGHLIVAGSFLRFHPEQAKTFDVVIQFGAILAVCWEYRRRIIDVVTGLPAQREARRFTMNVVIATVPAVALALLFEKTIKSVLFAPVPVAVALVVGGAAILWVEGRQRERSEPARVQSIDALTPFDALKVGLAQCCALIPGMSRSGSTIIGGMLFGLERRVATEFSFFLAIPVIFGATLYETAKDWRAFNVDSVGLFAIGLVAAFVSAFACVRWLLRYVASHDFTAFAWYRIAFGLFVLLVGYSGWIEWT.

5 consecutive transmembrane segments (helical) span residues 85–105 (MNVVIATVPAVALALLFEKTI), 108–128 (VLFAPVPVAVALVVGGAAILW), 187–207 (VATEFSFFLAIPVIFGATLYE), 217–237 (VDSVGLFAIGLVAAFVSAFAC), and 253–273 (FAWYRIAFGLFVLLVGYSGWI).

Belongs to the UppP family.

It localises to the cell inner membrane. The catalysed reaction is di-trans,octa-cis-undecaprenyl diphosphate + H2O = di-trans,octa-cis-undecaprenyl phosphate + phosphate + H(+). Catalyzes the dephosphorylation of undecaprenyl diphosphate (UPP). Confers resistance to bacitracin. The protein is Undecaprenyl-diphosphatase of Burkholderia mallei (strain NCTC 10247).